Here is a 283-residue protein sequence, read N- to C-terminus: Pyridoxine/pyridoxal/pyridoxamine kinase (283 aa).

Serine 23 and histidine 59 together coordinate substrate. Aspartate 125 serves as a coordination point for ATP. Tyrosine 136 contributes to the Mg(2+) binding site. Residues threonine 157, glutamate 162, threonine 195, 222–225, and threonine 232 contribute to the ATP site; that span reads HAHV. Glutamate 162 provides a ligand contact to Mg(2+). Residue aspartate 234 participates in substrate binding.

Belongs to the pyridoxine kinase family. PdxK subfamily. In terms of assembly, homodimer. Requires Mg(2+) as cofactor.

The catalysed reaction is pyridoxal + ATP = pyridoxal 5'-phosphate + ADP + H(+). It carries out the reaction pyridoxine + ATP = pyridoxine 5'-phosphate + ADP + H(+). It catalyses the reaction pyridoxamine + ATP = pyridoxamine 5'-phosphate + ADP + H(+). The protein operates within cofactor metabolism; pyridoxal 5'-phosphate salvage; pyridoxal 5'-phosphate from pyridoxal: step 1/1. It participates in cofactor metabolism; pyridoxal 5'-phosphate salvage; pyridoxine 5'-phosphate from pyridoxine: step 1/1. Its pathway is cofactor metabolism; pyridoxal 5'-phosphate salvage; pyridoxamine 5'-phosphate from pyridoxamine: step 1/1. In terms of biological role, B6-vitamer kinase involved in the salvage pathway of pyridoxal 5'-phosphate (PLP). Catalyzes the phosphorylation of pyridoxine (PN), pyridoxal (PL), and pyridoxamine (PM), forming their respective 5'-phosphorylated esters, i.e. PNP, PLP and PMP. This Bordetella pertussis (strain Tohama I / ATCC BAA-589 / NCTC 13251) protein is Pyridoxine/pyridoxal/pyridoxamine kinase.